Here is a 629-residue protein sequence, read N- to C-terminus: Methyl-accepting chemotaxis protein PctB (629 aa).

Topologically, residues 1–10 (MIKSLKFSHK) are cytoplasmic. Residues 11–31 (ILLAAALVVIATFSLFTLYND) traverse the membrane as a helical segment. Residues 32-276 (SLQRASIRED…AYAMLTKLRT (245 aa)) lie on the Periplasmic side of the membrane. Residues 37-260 (SIREDLEDYL…LSGLDWYIGI (224 aa)) enclose the Cache domain. L-arginine contacts are provided by residues tyrosine 109, serine 115, tyrosine 121, 126–128 (RPW), glutamate 146, and aspartate 173. L-glutamine-binding positions include serine 115, tyrosine 121, 126–128 (RPW), 144–146 (YME), and aspartate 173. A helical membrane pass occupies residues 277 to 297 (SAIVAALIAVVAIVLLLGMLI). The HAMP domain maps to 298–352 (RVLMQPLTDMGRAMQDIAQGEGDLTKRLKVTSNDEFGALAISFNRFVERIHESIR). Topologically, residues 298–629 (RVLMQPLTDM…LRQLVDSFKI (332 aa)) are cytoplasmic. Residues 357–593 (TARQLHDVAQ…SLNMDITEIN (237 aa)) enclose the Methyl-accepting transducer domain. Residues 405–424 (RNAADASHHASDANHQAEDG) are disordered. Positions 410-424 (ASHHASDANHQAEDG) are enriched in basic and acidic residues.

It belongs to the methyl-accepting chemotaxis (MCP) protein family. In terms of assembly, monomer in the absence and presence of ligands.

It localises to the cell inner membrane. In terms of biological role, chemotactic-signal transducers respond to changes in the concentration of attractants and repellents in the environment, transduce a signal from the outside to the inside of the cell, and facilitate sensory adaptation through the variation of the level of methylation. Responds to L-Arg, L-Gln, L-Ala, L-Glu, L-Lys, L-Met and L-Tyr. Also involved in repellent responses to trichloroethylene (TCE), chloroform and methylthiocyanate. The protein is Methyl-accepting chemotaxis protein PctB (pctB) of Pseudomonas aeruginosa (strain ATCC 15692 / DSM 22644 / CIP 104116 / JCM 14847 / LMG 12228 / 1C / PRS 101 / PAO1).